Reading from the N-terminus, the 176-residue chain is MQFSIFTVLAAAASFAVALPVCDATTTATTTSAAANPSPTTSGAANPSPTCGKLGDFHKTTVKAGQTLTTIAERFHSGICDIAWQNKLENPNVIFVGQVLLVPVNVCNPDNTSCLVPVGEATCVTGGPATYTIKSGDTFFAVAQSLGITTDSLTGANPGVVPENLQIDQVINVPVC.

An N-terminal signal peptide occupies residues 1–18 (MQFSIFTVLAAAASFAVA). Positions 31–45 (TSAAANPSPTTSGAA) are enriched in low complexity. Residues 31–50 (TSAAANPSPTTSGAANPSPT) form a disordered region. Residues 58 to 102 (HKTTVKAGQTLTTIAERFHSGICDIAWQNKLENPNVIFVGQVLLV) form the LysM 1 domain. Asn-111 carries an N-linked (GlcNAc...) asparagine glycan. Positions 129–173 (ATYTIKSGDTFFAVAQSLGITTDSLTGANPGVVPENLQIDQVINV) constitute a LysM 2 domain.

The protein belongs to the secreted LysM effector family. In terms of assembly, forms homodimers in a chitin-independent manner through interactions at the N-termini of EPL2 monomers. Homodimers are further polymerized in a chitin-dependent manner.

It is found in the secreted. In terms of biological role, secreted effector that enables the plant pathogenic fungus to manipulate host defenses for successful infection. Binds chitin oligomers and polymer with high affinity and plays a dual role, not only in the suppression of chitin-triggered immune responses, but also in appressorium function. Does not protect fungal hyphae against plant chitinases but suppresses chitin-triggered plant immune responses. Chitin-induced polymerization of homodimers forms a contiguous ELP2 highly oligomeric super-complexe that may precipitate at infection sites to eliminate chitin oligomers, and thus suppress the activation of chitin-induced plant immunity. In Colletotrichum higginsianum (strain IMI 349063) (Crucifer anthracnose fungus), this protein is Secreted LysM effector ELP2.